The following is a 1388-amino-acid chain: Retrotransposon Gag-like protein 9 (1388 aa).

5 disordered regions span residues 491–511 (ATAS…GAMS), 769–790 (TPLM…ASSS), 895–918 (GGVS…RRPS), 1100–1138 (TDSG…PKEV), and 1336–1388 (AMGN…HTNK). Over residues 1103 to 1123 (GEASTSHINITASGSKPTSHM) the composition is skewed to polar residues. The span at 1359-1374 (YLKEHGDPQEGLHDHL) shows a compositional bias: basic and acidic residues.

The sequence is that of Retrotransposon Gag-like protein 9 from Homo sapiens (Human).